The chain runs to 343 residues: Zinc finger protein Gfi-1b (343 aa).

The mediates repression of transcription stretch occupies residues 1–20 (MPRSFLVKSKKTHTYNQHRY). An SNAG domain region spans residues 1 to 20 (MPRSFLVKSKKTHTYNQHRY). Residues 51–77 (STDPTEKQHTPENVITEEARSDPGDPR) are disordered. The span at 67-77 (EEARSDPGDPR) shows a compositional bias: basic and acidic residues. 6 C2H2-type zinc fingers span residues 176-199 (YHCV…RRSH), 205-227 (FVCN…LNVH), 233-255 (FECK…LLIH), 261-283 (YPCQ…TYIH), 289-311 (HKCQ…SRKH), and 317-340 (FSCD…ENQH).

The protein resides in the nucleus. Essential transcriptional regulator necessary for development and differentiation of erythroid and megakaryocytic lineages. Alters histone methylation by recruiting histone methyltransferase to target genes promoters. Plays a role in heterochromatin formation. The sequence is that of Zinc finger protein Gfi-1b (gfi1b) from Xenopus laevis (African clawed frog).